Here is a 270-residue protein sequence, read N- to C-terminus: Putative pyruvate, phosphate dikinase regulatory protein (270 aa).

An ADP-binding site is contributed by 147 to 154 (GVSRSSKT).

Belongs to the pyruvate, phosphate/water dikinase regulatory protein family. PDRP subfamily.

It carries out the reaction N(tele)-phospho-L-histidyl/L-threonyl-[pyruvate, phosphate dikinase] + ADP = N(tele)-phospho-L-histidyl/O-phospho-L-threonyl-[pyruvate, phosphate dikinase] + AMP + H(+). It catalyses the reaction N(tele)-phospho-L-histidyl/O-phospho-L-threonyl-[pyruvate, phosphate dikinase] + phosphate + H(+) = N(tele)-phospho-L-histidyl/L-threonyl-[pyruvate, phosphate dikinase] + diphosphate. Functionally, bifunctional serine/threonine kinase and phosphorylase involved in the regulation of the pyruvate, phosphate dikinase (PPDK) by catalyzing its phosphorylation/dephosphorylation. The polypeptide is Putative pyruvate, phosphate dikinase regulatory protein (Citrifermentans bemidjiense (strain ATCC BAA-1014 / DSM 16622 / JCM 12645 / Bem) (Geobacter bemidjiensis)).